Here is a 229-residue protein sequence, read N- to C-terminus: Large ribosomal subunit protein uL1 (229 aa).

It belongs to the universal ribosomal protein uL1 family. Part of the 50S ribosomal subunit.

Functionally, binds directly to 23S rRNA. The L1 stalk is quite mobile in the ribosome, and is involved in E site tRNA release. In terms of biological role, protein L1 is also a translational repressor protein, it controls the translation of the L11 operon by binding to its mRNA. The chain is Large ribosomal subunit protein uL1 from Magnetococcus marinus (strain ATCC BAA-1437 / JCM 17883 / MC-1).